Here is a 565-residue protein sequence, read N- to C-terminus: Wee1-like protein kinase 2 (565 aa).

2 stretches are compositionally biased toward basic and acidic residues: residues 1–12 and 26–52; these read MGDNGDNKELKQ and EGQK…DSEA. Disordered stretches follow at residues 1–142 and 169–189; these read MGDN…TPGP and KSNG…EEGK. Ser-77 is modified (phosphoserine). The short motif at 173–175 is the Nuclear localization signal element; that stretch reads KRK. Basic and acidic residues predominate over residues 178-189; that stretch reads RDLEEAGPEEGK. One can recognise a Protein kinase domain in the interval 214–492; sequence FLEVEKIGVG…TRSRVLCPSL (279 aa). ATP contacts are provided by residues 220-228 and Lys-243; that span reads IGVGEFGTV. Residues 317–331 carry the Nuclear export signal motif; it reads KLKDILLQISLGLKY. Residue Asp-341 is the Proton acceptor of the active site. Mg(2+)-binding residues include Asn-346 and Asp-382. A coiled-coil region spans residues 495–521; sequence TEELQQQLNLEKFKTATLERELKEVQR. The segment at 518–565 is disordered; that stretch reads EVQRAQSSKEGQSSPGVTGTHTGSRSTRRLVGGKSAKSSSFTWGQSSP. Composition is skewed to polar residues over residues 521-534 and 553-565; these read RAQS…SPGV and AKSS…QSSP.

The protein belongs to the protein kinase superfamily. Ser/Thr protein kinase family. WEE1 subfamily. Phosphorylation leads to increase its activity. As to expression, ovary-specific.

It is found in the nucleus. It carries out the reaction L-tyrosyl-[protein] + ATP = O-phospho-L-tyrosyl-[protein] + ADP + H(+). In terms of biological role, oocyte-specific protein tyrosine kinase that phosphorylates and inhibits CDK1 and acts as a key regulator of meiosis during both prophase I and metaphase II. Required to maintain meiotic arrest in oocytes during the germinal vesicle (GV) stage, a long period of quiescence at dictyate prophase I, by phosphorylating CDK1 at 'Tyr-15', leading to inhibit CDK1 activity and prevent meiotic reentry. Also required for metaphase II exit during egg activation by phosphorylating CDK1 at 'Tyr-15', to ensure exit from meiosis in oocytes and promote pronuclear formation. The chain is Wee1-like protein kinase 2 (WEE2) from Sus scrofa (Pig).